The sequence spans 410 residues: Imidazolonepropionase (410 aa).

His-73 and His-75 together coordinate Fe(3+). 2 residues coordinate Zn(2+): His-73 and His-75. 4-imidazolone-5-propanoate is bound by residues Arg-82, Tyr-145, and His-178. Tyr-145 serves as a coordination point for N-formimidoyl-L-glutamate. His-243 contributes to the Fe(3+) binding site. His-243 is a binding site for Zn(2+). Gln-246 contacts 4-imidazolone-5-propanoate. Asp-318 is a Fe(3+) binding site. Position 318 (Asp-318) interacts with Zn(2+). Residues Asn-320 and Gly-322 each contribute to the N-formimidoyl-L-glutamate site. Residue Ser-323 coordinates 4-imidazolone-5-propanoate.

The protein belongs to the metallo-dependent hydrolases superfamily. HutI family. It depends on Zn(2+) as a cofactor. The cofactor is Fe(3+).

The protein resides in the cytoplasm. The catalysed reaction is 4-imidazolone-5-propanoate + H2O = N-formimidoyl-L-glutamate. It functions in the pathway amino-acid degradation; L-histidine degradation into L-glutamate; N-formimidoyl-L-glutamate from L-histidine: step 3/3. Catalyzes the hydrolytic cleavage of the carbon-nitrogen bond in imidazolone-5-propanoate to yield N-formimidoyl-L-glutamate. It is the third step in the universal histidine degradation pathway. The protein is Imidazolonepropionase of Shewanella frigidimarina (strain NCIMB 400).